We begin with the raw amino-acid sequence, 469 residues long: UDP-N-acetylmuramate--L-alanine ligase (469 aa).

Residue 120–126 (GTHGKTT) coordinates ATP.

This sequence belongs to the MurCDEF family.

It localises to the cytoplasm. It catalyses the reaction UDP-N-acetyl-alpha-D-muramate + L-alanine + ATP = UDP-N-acetyl-alpha-D-muramoyl-L-alanine + ADP + phosphate + H(+). Its pathway is cell wall biogenesis; peptidoglycan biosynthesis. Cell wall formation. The sequence is that of UDP-N-acetylmuramate--L-alanine ligase from Acetivibrio thermocellus (strain ATCC 27405 / DSM 1237 / JCM 9322 / NBRC 103400 / NCIMB 10682 / NRRL B-4536 / VPI 7372) (Clostridium thermocellum).